Consider the following 366-residue polypeptide: MLKKRYLVLEDGSYYEGYPIGSDQLTLGEIVFNTAMTGYQETISDPSYTGQIITFTYPLIGNYGINRDDFEALVPTLNGVVVKEASRQPSNFRKQKTFHEVLQEYDIPGISGVDTRSITRKIRNNGVLKAGFTDEKSEIDSMIAKLQSVELPRNEVTTVSTKSPYVSTGYGLSVVLVDFGKKQNIVRELNARGCNVTVVPYDTSAEAIIRMSPDGVMLSNGPGDPEEVHVAVEMIKGILGKIPFFGICLGHQLFALSQGATSFKMKFGHRGANHPVKDLKTGKIALTSQNHGYAIDKASLKNTDLEVTHIAINDDTVEGLRHKSLPAFSVQYHPEACPGPSDSNYLFDEFIDMINEYKTKELTNNA.

The tract at residues 1–170 (MLKKRYLVLE…TKSPYVSTGY (170 aa)) is CPSase. Residues serine 47, glycine 221, and glycine 223 each contribute to the L-glutamine site. In terms of domain architecture, Glutamine amidotransferase type-1 spans 173 to 360 (SVVLVDFGKK…IDMINEYKTK (188 aa)). Catalysis depends on cysteine 248, which acts as the Nucleophile. L-glutamine is bound by residues leucine 249, glutamine 252, asparagine 290, glycine 292, and tyrosine 293. Catalysis depends on residues histidine 333 and glutamate 335.

This sequence belongs to the CarA family. Composed of two chains; the small (or glutamine) chain promotes the hydrolysis of glutamine to ammonia, which is used by the large (or ammonia) chain to synthesize carbamoyl phosphate. Tetramer of heterodimers (alpha,beta)4.

The catalysed reaction is hydrogencarbonate + L-glutamine + 2 ATP + H2O = carbamoyl phosphate + L-glutamate + 2 ADP + phosphate + 2 H(+). The enzyme catalyses L-glutamine + H2O = L-glutamate + NH4(+). Its pathway is amino-acid biosynthesis; L-arginine biosynthesis; carbamoyl phosphate from bicarbonate: step 1/1. It functions in the pathway pyrimidine metabolism; UMP biosynthesis via de novo pathway; (S)-dihydroorotate from bicarbonate: step 1/3. In terms of biological role, small subunit of the glutamine-dependent carbamoyl phosphate synthetase (CPSase). CPSase catalyzes the formation of carbamoyl phosphate from the ammonia moiety of glutamine, carbonate, and phosphate donated by ATP, constituting the first step of 2 biosynthetic pathways, one leading to arginine and/or urea and the other to pyrimidine nucleotides. The small subunit (glutamine amidotransferase) binds and cleaves glutamine to supply the large subunit with the substrate ammonia. The chain is Carbamoyl phosphate synthase small chain from Staphylococcus saprophyticus subsp. saprophyticus (strain ATCC 15305 / DSM 20229 / NCIMB 8711 / NCTC 7292 / S-41).